A 185-amino-acid polypeptide reads, in one-letter code: MGQQVIKSSTEKMEKAVAAYSRELATVRAGRASASILDKVQVDYYGAPTPVVQLANITVPEARLLVIQPYDKTSIGDIEKAILKADLGLNPSNDGSVIRIAFPALTEERRRELVKVVKKYAEDAKVAIRNVRRDGNDELKKLEKAGEMTEDDLRGYTEDIQKETDKYIAKVDEIAKNKEQEIMEV.

Belongs to the RRF family.

The protein localises to the cytoplasm. Functionally, responsible for the release of ribosomes from messenger RNA at the termination of protein biosynthesis. May increase the efficiency of translation by recycling ribosomes from one round of translation to another. This is Ribosome-recycling factor from Bacillus cytotoxicus (strain DSM 22905 / CIP 110041 / 391-98 / NVH 391-98).